A 1394-amino-acid chain; its full sequence is DNA-directed RNA polymerase subunit beta' (1394 aa).

Cys-70, Cys-72, Cys-85, and Cys-88 together coordinate Zn(2+). Positions 470, 472, and 474 each coordinate Mg(2+). Residues Cys-815, Cys-889, Cys-896, and Cys-899 each coordinate Zn(2+).

The protein belongs to the RNA polymerase beta' chain family. In terms of assembly, the RNAP catalytic core consists of 2 alpha, 1 beta, 1 beta' and 1 omega subunit. When a sigma factor is associated with the core the holoenzyme is formed, which can initiate transcription. Requires Mg(2+) as cofactor. Zn(2+) is required as a cofactor.

It catalyses the reaction RNA(n) + a ribonucleoside 5'-triphosphate = RNA(n+1) + diphosphate. Its function is as follows. DNA-dependent RNA polymerase catalyzes the transcription of DNA into RNA using the four ribonucleoside triphosphates as substrates. This is DNA-directed RNA polymerase subunit beta' from Anaeromyxobacter sp. (strain K).